The following is a 230-amino-acid chain: GDT1-like protein 4 (230 aa).

6 consecutive transmembrane segments (helical) span residues 12–32, 39–59, 71–91, 135–155, 175–195, and 207–227; these read LAMT…AILA, LVLA…ATLG, THHI…WDGF, AFLT…NFFG, FGVV…AVIG, and IVAL…YLTS.

It belongs to the GDT1 family.

The protein localises to the membrane. This chain is GDT1-like protein 4, found in Arabidopsis thaliana (Mouse-ear cress).